Here is a 377-residue protein sequence, read N- to C-terminus: Modification methylase CviBIII (377 aa).

It belongs to the N(4)/N(6)-methyltransferase family.

It catalyses the reaction a 2'-deoxyadenosine in DNA + S-adenosyl-L-methionine = an N(6)-methyl-2'-deoxyadenosine in DNA + S-adenosyl-L-homocysteine + H(+). Its function is as follows. A gamma subtype methylase that recognizes the double-stranded sequence 5'-TCGA-3' and methylates A-4 on both strands. The sequence is that of Modification methylase CviBIII (CVIBIIIM) from Paramecium bursaria Chlorella virus NC1A (PBCV-NC1A).